The chain runs to 711 residues: Catalase HPII (711 aa).

Residues 1–10 are compositionally biased toward basic and acidic residues; the sequence is MPSKKTDAPK. Residues 1–27 form a disordered region; the sequence is MPSKKTDAPKQSEAAGTQTPDRANTNA. Polar residues predominate over residues 14–27; it reads AAGTQTPDRANTNA. Residues histidine 92 and asparagine 165 contribute to the active site. Tyrosine 379 serves as a coordination point for heme.

Belongs to the catalase family. HPII subfamily. Heme is required as a cofactor.

The protein localises to the cytoplasm. The enzyme catalyses 2 H2O2 = O2 + 2 H2O. Decomposes hydrogen peroxide into water and oxygen; serves to protect cells from the toxic effects of hydrogen peroxide. This is Catalase HPII (katE) from Pseudomonas putida (Arthrobacter siderocapsulatus).